The sequence spans 399 residues: Elongation factor Tu (399 aa).

Residues Lys-10–Glu-204 form the tr-type G domain. The interval Gly-19–Thr-26 is G1. GTP is bound at residue Gly-19–Thr-26. Thr-26 is a Mg(2+) binding site. Positions Gly-60–Asn-64 are G2. The interval Asp-81–Gly-84 is G3. Residues Asp-81–His-85 and Asn-136–Asp-139 each bind GTP. The interval Asn-136–Asp-139 is G4. A G5 region spans residues Ser-174–Leu-176.

This sequence belongs to the TRAFAC class translation factor GTPase superfamily. Classic translation factor GTPase family. EF-Tu/EF-1A subfamily. As to quaternary structure, monomer.

It is found in the cytoplasm. The enzyme catalyses GTP + H2O = GDP + phosphate + H(+). GTP hydrolase that promotes the GTP-dependent binding of aminoacyl-tRNA to the A-site of ribosomes during protein biosynthesis. This is Elongation factor Tu from Prochlorococcus marinus (strain SARG / CCMP1375 / SS120).